We begin with the raw amino-acid sequence, 213 residues long: Adenylate kinase (213 aa).

10–15 (GAGKGT) serves as a coordination point for ATP. The interval 30–59 (STGDMLRAALKEGTPLGLEAKKYMDQGALV) is NMP. AMP contacts are provided by residues threonine 31, arginine 36, 57–59 (ALV), 85–88 (GFPR), and glutamine 92. The segment at 126–163 (GRRTCRSCGAGFHVMFDPPKTDGKCDKCGGELYQRDDD) is LID. Arginine 127 contacts ATP. Residues cysteine 130, cysteine 133, cysteine 150, and cysteine 153 each coordinate Zn(2+). AMP-binding residues include arginine 160 and arginine 171. ATP is bound at residue glycine 199.

Belongs to the adenylate kinase family. Monomer.

It is found in the cytoplasm. It catalyses the reaction AMP + ATP = 2 ADP. It participates in purine metabolism; AMP biosynthesis via salvage pathway; AMP from ADP: step 1/1. Functionally, catalyzes the reversible transfer of the terminal phosphate group between ATP and AMP. Plays an important role in cellular energy homeostasis and in adenine nucleotide metabolism. The polypeptide is Adenylate kinase (Syntrophobacter fumaroxidans (strain DSM 10017 / MPOB)).